The sequence spans 335 residues: MPGPAVDAEKVPFRSAKEEIRAGVGVEGSEGGGGGGGRERPGARGHRQDIVWRNVFLMSLLHLAAVYSLVLIPKAQPLTLLWAYFCFLLTALGVTAGAHRLWSHRSYKAKLPLRIFLAAANSMAFQNDIFEWSRDHRVHHKYSETDADPHNARRGFFFSHIGWLFVRKHRDVIEKGRKLDVTDLLADPVVRFQRKYYKITVVLMCFVVPTLVPWYIWGESLWNSYFLASILRYTISLNVTWLVNSVAHMYGNRPYDKHISPRQNPLVTLGAIGEGFHNYHHTFPFDYSASEFGLNFNPTTWFIDFMCWLGLATDRKRATKQMIEARKARTGDGSA.

The Cytoplasmic segment spans residues 1–54 (MPGPAVDAEKVPFRSAKEEIRAGVGVEGSEGGGGGGGRERPGARGHRQDIVWRN). Residues 24-44 (VGVEGSEGGGGGGGRERPGAR) form a disordered region. Gly residues predominate over residues 25 to 36 (GVEGSEGGGGGG). Residue asparagine 54 coordinates substrate. A helical membrane pass occupies residues 55–75 (VFLMSLLHLAAVYSLVLIPKA). Residues 76-77 (QP) are Lumenal-facing. Residues 78–98 (LTLLWAYFCFLLTALGVTAGA) traverse the membrane as a helical segment. 2 residues coordinate Fe cation: histidine 99 and histidine 104. The Histidine box-1 signature appears at 99-104 (HRLWSH). Topologically, residues 99–198 (HRLWSHRSYK…VVRFQRKYYK (100 aa)) are cytoplasmic. Substrate contacts are provided by asparagine 127, arginine 134, and aspartate 135. Residues histidine 136, histidine 139, and histidine 140 each coordinate Fe cation. The Histidine box-2 motif lies at 136–140 (HRVHH). Residues arginine 167 and lysine 168 each contribute to the substrate site. The helical transmembrane segment at 199–219 (ITVVLMCFVVPTLVPWYIWGE) threads the bilayer. Residues 220 to 227 (SLWNSYFL) lie on the Lumenal side of the membrane. The chain crosses the membrane as a helical span at residues 228 to 247 (ASILRYTISLNVTWLVNSVA). Residue tryptophan 241 participates in substrate binding. Fe cation-binding residues include histidine 248, histidine 277, histidine 280, and histidine 281. Over 248–335 (HMYGNRPYDK…RKARTGDGSA (88 aa)) the chain is Cytoplasmic. The Histidine box-3 signature appears at 277–281 (HNYHH).

It belongs to the fatty acid desaturase type 1 family. May self-associate and form homodimers. Fe(2+) serves as cofactor. Detected in brain.

The protein localises to the endoplasmic reticulum membrane. It carries out the reaction octadecanoyl-CoA + 2 Fe(II)-[cytochrome b5] + O2 + 2 H(+) = (9Z)-octadecenoyl-CoA + 2 Fe(III)-[cytochrome b5] + 2 H2O. The enzyme catalyses hexadecanoyl-CoA + 2 Fe(II)-[cytochrome b5] + O2 + 2 H(+) = (9Z)-hexadecenoyl-CoA + 2 Fe(III)-[cytochrome b5] + 2 H2O. Stearoyl-CoA desaturase that utilizes O(2) and electrons from reduced cytochrome b5 to introduce the first double bond into saturated fatty acyl-CoA substrates. Catalyzes the insertion of a cis double bond at the delta-9 position into fatty acyl-CoA substrates including palmitoyl-CoA and stearoyl-CoA. Gives rise to a mixture of 16:1 and 18:1 unsaturated fatty acids. Involved in neuronal cell proliferation and differentiation through down-regulation of EGFR/AKT/MAPK and Wnt signaling pathways. This chain is Stearoyl-CoA desaturase 5 (SCD5), found in Bos taurus (Bovine).